The sequence spans 446 residues: Calcium-binding and coiled-coil domain-containing protein 2 (446 aa).

The CLIR motif lies at 133 to 136; that stretch reads ILVV. Residues 137–349 adopt a coiled-coil conformation; that stretch reads TTQGEVEEIE…RENSRLLSYM (213 aa). Residues 203-206 carry the LIR-like motif; the sequence is DYWE. A disordered region spans residues 362-390; it reads TSDEGGARQNPGLAYGNPYSGIQESSSPS. The tract at residues 371–381 is interaction with LGALS8; it reads NPGLAYGNPYS. Polar residues predominate over residues 381 to 390; it reads SGIQESSSPS. An interaction with MYO6 region spans residues 395–446; it reads KKCPICKADDICDHTLEQQQMQPLCFNCPICDKIFPATEKQIFEDHVFCHSL. The UBZ1-type zinc finger occupies 419–444; the sequence is CFNCPICDKIFPATEKQIFEDHVFCH. Zn(2+)-binding residues include Cys-422, Cys-425, His-440, and His-444. Residue Ser-445 is modified to Phosphoserine.

The protein belongs to the CALCOCO family. In terms of assembly, dimer. Part of a complex consisting of CALCOCO2, TAX1BP1 and MYO6. Interacts with MYO6. Interacts with GEMIN4. Interacts with ATG8 family members MAP1LC3A, MAP1LC3B, GABARAP, GABARAPL1 and GABARAPL2. Interacts with ATG8 family member MAP1LC3C. Interacts with LGALS8. Interacts with TOM1; the interaction is indirect and is mediated by MYO6, which acts as a bridge between TOM1 and CALCOCO2. Interacts with AZI2. (Microbial infection) Interacts with Lassa virus protein Z. As to quaternary structure, (Microbial infection) Interacts with Mopeia virus protein Z. In terms of processing, (Microbial infection) Cleaved by S.pyogenes SpeB protease; leading to its degradation. Degradation by SpeB prevents autophagy, promoting to S.pyogenes intracellular replication. Expressed in all tissues tested with highest expression in skeletal muscle and lowest in brain.

The protein resides in the cytoplasm. Its subcellular location is the perinuclear region. It localises to the cytoskeleton. It is found in the cytoplasmic vesicle. The protein localises to the autophagosome membrane. Xenophagy-specific receptor required for autophagy-mediated intracellular bacteria degradation. Acts as an effector protein of galectin-sensed membrane damage that restricts the proliferation of infecting pathogens such as Salmonella typhimurium upon entry into the cytosol by targeting LGALS8-associated bacteria for autophagy. Initially orchestrates bacteria targeting to autophagosomes and subsequently ensures pathogen degradation by regulating pathogen-containing autophagosome maturation. Bacteria targeting to autophagosomes relies on its interaction with MAP1LC3A, MAP1LC3B and/or GABARAPL2, whereas regulation of pathogen-containing autophagosome maturation requires the interaction with MAP3LC3C. May play a role in ruffle formation and actin cytoskeleton organization and seems to negatively regulate constitutive secretion. This Homo sapiens (Human) protein is Calcium-binding and coiled-coil domain-containing protein 2 (CALCOCO2).